Reading from the N-terminus, the 210-residue chain is uncharacterized protein (210 aa).

Low complexity predominate over residues 101 to 114 (QELPEPSSPQSQSS). The segment at 101-166 (QELPEPSSPQ…SSGVSSDLQK (66 aa)) is disordered. Residues 147–164 (RSTSPVTASTSSGVSSDL) show a composition bias toward polar residues.

This is an uncharacterized protein from Alcelaphine herpesvirus 1 (strain C500) (AlHV-1).